The chain runs to 397 residues: Ribosomal RNA large subunit methyltransferase I (397 aa).

In terms of domain architecture, PUA spans Ser-2 to Lys-80.

This sequence belongs to the methyltransferase superfamily. RlmI family.

The protein localises to the cytoplasm. It catalyses the reaction cytidine(1962) in 23S rRNA + S-adenosyl-L-methionine = 5-methylcytidine(1962) in 23S rRNA + S-adenosyl-L-homocysteine + H(+). In terms of biological role, specifically methylates the cytosine at position 1962 (m5C1962) of 23S rRNA. In Vibrio vulnificus (strain YJ016), this protein is Ribosomal RNA large subunit methyltransferase I.